Consider the following 303-residue polypeptide: GTPase Era (303 aa).

One can recognise an Era-type G domain in the interval 7–176; the sequence is KSGFVAIIGR…LDNVVSHLDE (170 aa). The tract at residues 15–22 is G1; the sequence is GRPNVGKS. Residue 15–22 participates in GTP binding; it reads GRPNVGKS. The G2 stretch occupies residues 41-45; the sequence is QTTRN. Positions 62–65 are G3; sequence DTPG. GTP is bound by residues 62–66 and 125–128; these read DTPGV and NKVD. The interval 125–128 is G4; the sequence is NKVD. Residues 155-157 form a G5 region; that stretch reads ISA. Positions 207-284 constitute a KH type-2 domain; sequence TRQEVPHSVA…FLETWVKVEP (78 aa).

This sequence belongs to the TRAFAC class TrmE-Era-EngA-EngB-Septin-like GTPase superfamily. Era GTPase family. As to quaternary structure, monomer.

It localises to the cytoplasm. Its subcellular location is the cell membrane. An essential GTPase that binds both GDP and GTP, with rapid nucleotide exchange. Plays a role in 16S rRNA processing and 30S ribosomal subunit biogenesis and possibly also in cell cycle regulation and energy metabolism. This chain is GTPase Era, found in Leuconostoc citreum (strain KM20).